A 141-amino-acid polypeptide reads, in one-letter code: Hemoglobin subunit alpha-2 (141 aa).

In terms of domain architecture, Globin spans 1 to 141 (VLSEGNKKII…VTYQLSSLYR (141 aa)). Histidine 59 contacts O2. Histidine 88 is a binding site for heme b.

The protein belongs to the globin family. Heterotetramer of two alpha chains and two beta chains. Red blood cells.

Functionally, involved in oxygen transport from the lung to the various peripheral tissues. The protein is Hemoglobin subunit alpha-2 of Torpedo marmorata (Marbled electric ray).